The chain runs to 60 residues: Large ribosomal subunit protein uL30 (60 aa).

Belongs to the universal ribosomal protein uL30 family. As to quaternary structure, part of the 50S ribosomal subunit.

This Dehalococcoides mccartyi (strain ATCC BAA-2100 / JCM 16839 / KCTC 5957 / BAV1) protein is Large ribosomal subunit protein uL30.